The following is a 262-amino-acid chain: Nickel import ATP-binding protein NikD (262 aa).

Residues 6–249 (LAIEGLTATT…PGHEVTRMLV (244 aa)) enclose the ABC transporter domain. 42 to 49 (GASGSGKS) contacts ATP.

Belongs to the ABC transporter superfamily. Nickel importer (TC 3.A.1.5.3) family. In terms of assembly, the complex is composed of two ATP-binding proteins (NikD and NikE), two transmembrane proteins (NikB and NikC) and a solute-binding protein (NikA).

It is found in the cell inner membrane. It catalyses the reaction Ni(2+)(out) + ATP + H2O = Ni(2+)(in) + ADP + phosphate + H(+). Functionally, part of the ABC transporter complex NikABCDE involved in nickel import. Responsible for energy coupling to the transport system. This chain is Nickel import ATP-binding protein NikD, found in Brucella abortus biovar 1 (strain 9-941).